The sequence spans 87 residues: uncharacterized protein (87 aa).

This is an uncharacterized protein from Methanocaldococcus jannaschii (strain ATCC 43067 / DSM 2661 / JAL-1 / JCM 10045 / NBRC 100440) (Methanococcus jannaschii).